We begin with the raw amino-acid sequence, 747 residues long: Putative T-box protein 31 (747 aa).

A DNA-binding region (T-box) is located at residues Gln-33–Asp-199. Disordered stretches follow at residues Ser-268–Asp-289 and Ser-332–Lys-364. Residues Ser-332–Ser-358 show a composition bias toward polar residues.

The protein localises to the nucleus. In Caenorhabditis elegans, this protein is Putative T-box protein 31 (tbx-31).